The primary structure comprises 374 residues: uncharacterized protein (374 aa).

The chain crosses the membrane as a helical span at residues 27–49 (AISPILALLIVLGVTIVVGAVFY).

It localises to the membrane. This is an uncharacterized protein from Methanocaldococcus jannaschii (strain ATCC 43067 / DSM 2661 / JAL-1 / JCM 10045 / NBRC 100440) (Methanococcus jannaschii).